The sequence spans 349 residues: Phosphoribosylformylglycinamidine cyclo-ligase (349 aa).

The protein belongs to the AIR synthase family.

The protein localises to the cytoplasm. It carries out the reaction 2-formamido-N(1)-(5-O-phospho-beta-D-ribosyl)acetamidine + ATP = 5-amino-1-(5-phospho-beta-D-ribosyl)imidazole + ADP + phosphate + H(+). Its pathway is purine metabolism; IMP biosynthesis via de novo pathway; 5-amino-1-(5-phospho-D-ribosyl)imidazole from N(2)-formyl-N(1)-(5-phospho-D-ribosyl)glycinamide: step 2/2. This chain is Phosphoribosylformylglycinamidine cyclo-ligase, found in Lactobacillus delbrueckii subsp. bulgaricus (strain ATCC 11842 / DSM 20081 / BCRC 10696 / JCM 1002 / NBRC 13953 / NCIMB 11778 / NCTC 12712 / WDCM 00102 / Lb 14).